The following is a 288-amino-acid chain: Acetyl-coenzyme A carboxylase carboxyl transferase subunit beta (288 aa).

The 255-residue stretch at 34 to 288 (LFAKCPACKH…HLVAFHGGGQ (255 aa)) folds into the CoA carboxyltransferase N-terminal domain. 4 residues coordinate Zn(2+): Cys-38, Cys-41, Cys-56, and Cys-59. The segment at 38 to 59 (CPACKHMIYKKDLGLAKICPTC) adopts a C4-type zinc-finger fold.

The protein belongs to the AccD/PCCB family. As to quaternary structure, acetyl-CoA carboxylase is a heterohexamer composed of biotin carboxyl carrier protein (AccB), biotin carboxylase (AccC) and two subunits each of ACCase subunit alpha (AccA) and ACCase subunit beta (AccD). It depends on Zn(2+) as a cofactor.

The protein resides in the cytoplasm. It catalyses the reaction N(6)-carboxybiotinyl-L-lysyl-[protein] + acetyl-CoA = N(6)-biotinyl-L-lysyl-[protein] + malonyl-CoA. It participates in lipid metabolism; malonyl-CoA biosynthesis; malonyl-CoA from acetyl-CoA: step 1/1. Its function is as follows. Component of the acetyl coenzyme A carboxylase (ACC) complex. Biotin carboxylase (BC) catalyzes the carboxylation of biotin on its carrier protein (BCCP) and then the CO(2) group is transferred by the transcarboxylase to acetyl-CoA to form malonyl-CoA. This Streptococcus pyogenes serotype M4 (strain MGAS10750) protein is Acetyl-coenzyme A carboxylase carboxyl transferase subunit beta.